The chain runs to 398 residues: Bone morphogenetic protein 2-B (398 aa).

The signal sequence occupies residues 1 to 23; it reads MVAGIHSLLLLQFYQILLSGCTG. A propeptide spanning residues 24–284 is cleaved from the precursor; it reads LVPEEGKRKY…GHALHKRQKR (261 aa). Asn137, Asn202, Asn237, and Asn340 each carry an N-linked (GlcNAc...) asparagine glycan. 3 cysteine pairs are disulfide-bonded: Cys298/Cys363, Cys327/Cys395, and Cys331/Cys397.

Belongs to the TGF-beta family. Homodimer; disulfide-linked.

It localises to the secreted. In terms of biological role, induces cartilage and bone formation. The sequence is that of Bone morphogenetic protein 2-B (bmp2-b) from Xenopus laevis (African clawed frog).